The chain runs to 429 residues: 3-phosphoshikimate 1-carboxyvinyltransferase (429 aa).

3-phosphoshikimate is bound by residues Lys11, Ser12, and Arg16. A phosphoenolpyruvate-binding site is contributed by Lys11. Phosphoenolpyruvate contacts are provided by Gly82 and Arg110. 3-phosphoshikimate contacts are provided by Ser155, Gln157, Asp302, and Lys329. Position 157 (Gln157) interacts with phosphoenolpyruvate. Asp302 (proton acceptor) is an active-site residue. Positions 333 and 385 each coordinate phosphoenolpyruvate.

It belongs to the EPSP synthase family. In terms of assembly, monomer.

It localises to the cytoplasm. The enzyme catalyses 3-phosphoshikimate + phosphoenolpyruvate = 5-O-(1-carboxyvinyl)-3-phosphoshikimate + phosphate. It participates in metabolic intermediate biosynthesis; chorismate biosynthesis; chorismate from D-erythrose 4-phosphate and phosphoenolpyruvate: step 6/7. Catalyzes the transfer of the enolpyruvyl moiety of phosphoenolpyruvate (PEP) to the 5-hydroxyl of shikimate-3-phosphate (S3P) to produce enolpyruvyl shikimate-3-phosphate and inorganic phosphate. This chain is 3-phosphoshikimate 1-carboxyvinyltransferase, found in Helicobacter pylori (strain J99 / ATCC 700824) (Campylobacter pylori J99).